We begin with the raw amino-acid sequence, 366 residues long: Tetraacyldisaccharide 4'-kinase (366 aa).

62–69 (RVGGTGKT) provides a ligand contact to ATP.

It belongs to the LpxK family.

The catalysed reaction is a lipid A disaccharide + ATP = a lipid IVA + ADP + H(+). Its pathway is glycolipid biosynthesis; lipid IV(A) biosynthesis; lipid IV(A) from (3R)-3-hydroxytetradecanoyl-[acyl-carrier-protein] and UDP-N-acetyl-alpha-D-glucosamine: step 6/6. In terms of biological role, transfers the gamma-phosphate of ATP to the 4'-position of a tetraacyldisaccharide 1-phosphate intermediate (termed DS-1-P) to form tetraacyldisaccharide 1,4'-bis-phosphate (lipid IVA). The sequence is that of Tetraacyldisaccharide 4'-kinase from Polynucleobacter necessarius subsp. necessarius (strain STIR1).